Consider the following 453-residue polypeptide: UDP-N-acetylmuramoylalanine--D-glutamate ligase (453 aa).

An ATP-binding site is contributed by 119-125 (GSNGKTT).

The protein belongs to the MurCDEF family.

It localises to the cytoplasm. The enzyme catalyses UDP-N-acetyl-alpha-D-muramoyl-L-alanine + D-glutamate + ATP = UDP-N-acetyl-alpha-D-muramoyl-L-alanyl-D-glutamate + ADP + phosphate + H(+). Its pathway is cell wall biogenesis; peptidoglycan biosynthesis. In terms of biological role, cell wall formation. Catalyzes the addition of glutamate to the nucleotide precursor UDP-N-acetylmuramoyl-L-alanine (UMA). The chain is UDP-N-acetylmuramoylalanine--D-glutamate ligase from Streptococcus uberis (strain ATCC BAA-854 / 0140J).